A 279-amino-acid chain; its full sequence is Coiled-coil domain-containing protein 106 (279 aa).

Residues 62-101 (KAQLHMALERNSWLQKRIEDLEEERDFLRCQLDKFISSAR) adopt a coiled-coil conformation. The segment covering 109 to 121 (RMKPGPRRVDGDS) has biased composition (basic and acidic residues). The interval 109–173 (RMKPGPRRVD…FGKTKARERQ (65 aa)) is disordered. Residue Ser129 is modified to Phosphoserine. A Bipartite nuclear localization signal motif is present at residues 151–164 (KRQKQKGSTSRKRF). Positions 151-167 (KRQKQKGSTSRKRFGKT) are enriched in basic residues.

In terms of assembly, interacts with p53/TP53.

The protein resides in the nucleus. In terms of biological role, promotes the degradation of p53/TP53 protein and inhibits its transactivity. The protein is Coiled-coil domain-containing protein 106 (Ccdc106) of Mus musculus (Mouse).